Reading from the N-terminus, the 389-residue chain is MEANGYRITHSADGPATILAIGTANPTNVVDQNAYPDFYFRVTNSEYLQELKAKFRRICEKAAIRKRHLYLTEEILRENPSLLAPMAPSFDARQAIVVEAVPKLAKEAAEKAIKEWGRPKSDITHLVFCSASGIDMPGSDLQLLKLLGLPPSVNRVMLYNVGCHAGGTALRVAKDLAENNRGARVLAVCSEVTVLSYRGPHPAHIESLFVQALFGDGAAALVVGSDPVDGVERPIFEIASASQVMLPESAEAVGGHLREIGLTFHLKSQLPSIIASNIEQSLTTACSPLGLSDWNQLFWAVHPGGRAILDQVEARLGLEKDRLAATRHVLSEYGNMQSATVLFILDEMRNRSAAEGHATTGEGLDWGVLLGFGPGLSIETVVLHSCRLN.

Residue cysteine 163 is part of the active site.

It belongs to the thiolase-like superfamily. Chalcone/stilbene synthases family. In terms of assembly, homodimer. Expressed in both the leaf and rhizome, with higher expression in the rhizome.

The enzyme catalyses (E)-feruloyl-CoA + malonyl-CoA + H(+) = (E)-feruloylacetyl-CoA + CO2 + CoA. It catalyses the reaction 4-coumaroyl-CoA + malonyl-CoA + H(+) = (4-coumaroyl)acetyl-CoA + CO2 + CoA. It participates in secondary metabolite biosynthesis; flavonoid biosynthesis. Catalyzes the formation of feruloyldiketide-CoA by condensing feruloyl-CoA and malonyl-CoA in the curcuminoid biosynthesis. Has no activity with cinnamoyl-CoA. The polypeptide is Phenylpropanoylacetyl-CoA synthase (DCS) (Curcuma longa (Turmeric)).